A 730-amino-acid polypeptide reads, in one-letter code: MLHATVLPILLWLATLAYGFDRKEFLVDGNELPGFTKLKNTKHWTVPKMYAGHLPATRDNDTQYFFWKFENKKTKKNDETPLIIWLNGGPGCSSMAGALMEIGPFRLNKKAEVIKNDGSWHMRGSVLFLDQPVGTGFSYSKEDNEVSELDEVADNFMVFLQNYYATFPDDKDRELILAGESYAGQFIPYFTKAIIKFNEQQRDENSKINIKVMFIGNGWLDPKRQYLSYVPFSLEKGIIKKEDPAFKDILKQHETCQNYINSDHTGHSELSYPPCEAVLGKIISQDKTQCINVYKFDEYDSYPSCGLEWPVDTKFTKQFLTDKKVLAALHANDERSWIECRPDVKLENIKAKPAIELIPSLLESGIELILFNGNKDLICNTLGIDNVLKHLQWEGETGFTDEVQIFDWVYRDDLKSDKEKVAGTVKYERQLTLITIEDGSHMVSYDKALISRGILDMYYDDVLLVHRDGKDTLISSKDGDIDGYLEDDKSQDENKDNESEDESEDENDSDDESDGKEGDKQENKPDDSDDESDEEDDDEDEDDEDDDDDDDDDDGDDEDKKGDQNSHPSHGDMNGGLDNDLETGGEYYQDEDEEGSNFKAFFLILSLVSAFIIVAAFYISDYIKSRRHPILVDGDGRSRLNKSVTWASDIENGSFDIEDDDPEFGTEGMEDNMELEDVFSIDEEDEEQLEGVVPESTRKSKKGSKKKGKYFSVPNDDSAEDIELQDIERH.

Residues 1-19 (MLHATVLPILLWLATLAYG) form the signal peptide. Residues 20–599 (FDRKEFLVDG…DEDEEGSNFK (580 aa)) lie on the Lumenal side of the membrane. A glycan (N-linked (GlcNAc...) asparagine) is linked at asparagine 60. Active-site residues include serine 181, aspartate 376, and histidine 441. Positions 475 to 590 (SSKDGDIDGY…LETGGEYYQD (116 aa)) are disordered. Over residues 486–497 (EDDKSQDENKDN) the composition is skewed to basic and acidic residues. 2 N-linked (GlcNAc...) asparagine glycosylation sites follow: asparagine 497 and asparagine 507. The segment covering 498–514 (ESEDESEDENDSDDESD) has biased composition (acidic residues). Basic and acidic residues predominate over residues 515–526 (GKEGDKQENKPD). Acidic residues-rich tracts occupy residues 527 to 557 (DSDD…DGDD) and 579 to 590 (NDLETGGEYYQD). A helical membrane pass occupies residues 600–620 (AFFLILSLVSAFIIVAAFYIS). At 621–730 (DYIKSRRHPI…DIELQDIERH (110 aa)) the chain is on the cytoplasmic side. The interval 684–730 (EDEEQLEGVVPESTRKSKKGSKKKGKYFSVPNDDSAEDIELQDIERH) is disordered. Positions 699–709 (KSKKGSKKKGK) are enriched in basic residues. Acidic residues predominate over residues 717-730 (DSAEDIELQDIERH).

This sequence belongs to the peptidase S10 family.

It is found in the golgi apparatus. Its subcellular location is the trans-Golgi network membrane. It catalyses the reaction Preferential release of a C-terminal arginine or lysine residue.. In terms of biological role, protease with a carboxypeptidase B-like function involved in the C-terminal processing of the lysine and arginine residues from protein precursors. Promotes cell fusion and is involved in the programmed cell death. In Candida glabrata (strain ATCC 2001 / BCRC 20586 / JCM 3761 / NBRC 0622 / NRRL Y-65 / CBS 138) (Yeast), this protein is Pheromone-processing carboxypeptidase KEX1 (KEX1).